Consider the following 194-residue polypeptide: Accessory gene regulator protein B (194 aa).

Transmembrane regions (helical) follow at residues 44-64 (IVVYGLAIIFHTFFYTLLTHL), 80-100 (SSLLCHIQNIIFFIIFPYLII), 107-127 (FVLLSMALVGLIITILYAPAA), 142-162 (KILSIFLYCTIVVISLVTKEP), and 163-183 (VNKLILFGVILESLTLLPIFF).

Belongs to the AgrB family.

It is found in the cell membrane. Functionally, essential for the production of a quorum sensing system signal molecule, the autoinducing peptide (AIP). This quorum sensing system is responsible for the regulation of the expression of virulence factor genes. Involved in the proteolytic processing of AgrD, the precursor of AIP. The sequence is that of Accessory gene regulator protein B from Staphylococcus epidermidis.